We begin with the raw amino-acid sequence, 413 residues long: MAKEPMLQFVKMARETPEKRPRSLRSQDFHEICGRICPQDRLCEGNCVIEQSGHGTVTIGAVEKYITDTAWENGWVVPGKPAYERSESVGIIGAGPGGLAAADALRRAGLQVTVYDRYDRAGGLLTYGIPGFKLEKDVVARRVEQLEQAGVQFVLNCNVGEDLSFDAIRGQHDAVLIATGVYKQRDLAAPGVGSAGVVQALSYLTASNRRSFGDEVDDDGLDASGKRVVVIGGGDTAMDCVRTAIRQGATSVKCLYRRDRANMPGSQREVANAEEEGVEFVWLSAPRGFIAGDAVEGVIVQKMRLGEPDATGRQMPEIIEGADYVEPADLAIMALGFEPEDLPTLWGVPDLTVTRWGTIKADFRTHATSLPGVYAVGDIVRGASLVVWAIRDGRDAAQSILDYLAQPAVVAAE.

[4Fe-4S] cluster is bound by residues Cys33, Cys37, Cys43, and Cys47.

In terms of assembly, aggregate of 4 catalytic active heterodimers, consisting of a large and a small subunit. Requires [4Fe-4S] cluster as cofactor.

The enzyme catalyses 2 L-glutamate + NADP(+) = L-glutamine + 2-oxoglutarate + NADPH + H(+). It functions in the pathway amino-acid biosynthesis; L-glutamate biosynthesis via GLT pathway; L-glutamate from 2-oxoglutarate and L-glutamine (NADP(+) route): step 1/1. It participates in energy metabolism; nitrogen metabolism. The protein is Putative glutamate synthase [NADPH] small chain (gltD) of Cereibacter sphaeroides (Rhodobacter sphaeroides).